The primary structure comprises 467 residues: Nodulation protein T (467 aa).

A signal peptide spans 1–17; sequence MRFTRYTTPFFSLLLSG. Cys-18 carries the N-palmitoyl cysteine lipid modification. A lipid anchor (S-diacylglycerol cysteine) is attached at Cys-18.

It belongs to the outer membrane factor (OMF) (TC 1.B.17) family.

The protein resides in the cell membrane. The protein is Nodulation protein T (nodT) of Rhizobium leguminosarum bv. trifolii.